The following is an 85-amino-acid chain: Large ribosomal subunit protein bL27 (85 aa).

The segment at 1–24 (MAHKKAGGSSRNGRDSHSKRLGVK) is disordered.

Belongs to the bacterial ribosomal protein bL27 family.

This chain is Large ribosomal subunit protein bL27, found in Nitrosomonas eutropha (strain DSM 101675 / C91 / Nm57).